The chain runs to 237 residues: DNA repair protein RecO (237 aa).

Belongs to the RecO family.

In terms of biological role, involved in DNA repair and RecF pathway recombination. The polypeptide is DNA repair protein RecO (Rickettsia felis (strain ATCC VR-1525 / URRWXCal2) (Rickettsia azadi)).